The chain runs to 637 residues: Chaperone protein HtpG (637 aa).

The interval 1 to 347 is a; substrate-binding; the sequence is MTQSVHAETH…SNDLPLNVSR (347 aa). A b region spans residues 348–564; sequence EILQDNKVTV…NHGMSTQMIK (217 aa). Residues 565–637 are c; that stretch reads LMRAAGQPVP…SRINRLLLQA (73 aa).

This sequence belongs to the heat shock protein 90 family. In terms of assembly, homodimer.

It localises to the cytoplasm. Its function is as follows. Molecular chaperone. Has ATPase activity. The sequence is that of Chaperone protein HtpG from Aeromonas salmonicida (strain A449).